The following is a 247-amino-acid chain: UPF0246 protein LCABL_22600 (247 aa).

Belongs to the UPF0246 family.

The protein is UPF0246 protein LCABL_22600 of Lacticaseibacillus casei (strain BL23) (Lactobacillus casei).